Consider the following 375-residue polypeptide: tRNA-specific 2-thiouridylase MnmA (375 aa).

ATP is bound by residues 12 to 19 (GMSGGVDS) and M38. The tract at residues 98-100 (NPD) is interaction with target base in tRNA. C103 serves as the catalytic Nucleophile. An intrachain disulfide couples C103 to C200. G127 serves as a coordination point for ATP. The interval 150–152 (KDQ) is interaction with tRNA. The Cysteine persulfide intermediate role is filled by C200. The segment at 312 to 313 (RY) is interaction with tRNA.

Belongs to the MnmA/TRMU family.

It localises to the cytoplasm. The catalysed reaction is S-sulfanyl-L-cysteinyl-[protein] + uridine(34) in tRNA + AH2 + ATP = 2-thiouridine(34) in tRNA + L-cysteinyl-[protein] + A + AMP + diphosphate + H(+). In terms of biological role, catalyzes the 2-thiolation of uridine at the wobble position (U34) of tRNA, leading to the formation of s(2)U34. This Levilactobacillus brevis (strain ATCC 367 / BCRC 12310 / CIP 105137 / JCM 1170 / LMG 11437 / NCIMB 947 / NCTC 947) (Lactobacillus brevis) protein is tRNA-specific 2-thiouridylase MnmA.